The sequence spans 2103 residues: MAPNHVLFFPQERVTFDAVHDLNVRSKSRRRLQSLLAAASNVVQHWTASLDGLERADIGSFEDLVELAERQTTQTRGSIVADLVLLTTVQIGQLLVLAEDDPAILSGHAGARAIPMGFGAGLVAAGVAAAATSADGIVNLGLEAVSVAFRLGVELQRRGKDIEDSNGPWAQVISSATTIADLEQALDRINASLRPINQAYIGEVMTESTVVFGPPSTLDALAKRPELAHATITSPASALAQVPLHGAHLPPISATMIAASSSQQATELWKLAVEEVANKPIDVHQAVTALIHDLHRANITDIVLTAIGASTETSGIQSLLEKNGLAVELGQLSPTPRPYGNDLDSIPADAIAVVGMSGRFPNSDTLDEFWRLLETATTTHQVIPESRFNVDDFYDPTRAKHNALLARYGCFLKNPGDFDHRLFNISPREAMQMDPVQRMLLMTTYEALEMAGYSPPTPAAPGDSEQAPPRIATYFGQTIDDWKSINDQQGIDTHYLPGVNRGFAPGRLSHFFQWAGGFYSIDTGCSSSATALCLARDALTAGKYDAAVVGGGTLLTAPEWFAGLSQGGFLSPTGACKTYSDSADGYCRGEGVGVVILKRLADAVRSKDNVIAVIAGASRNCNAGAGSITYPGEKAQGALYRRVMRQAAVRPEQVDVVEMHGTGTQAGDRVETHAVQSVFAPSNGNQREKPLIVGALKANIGHSEAAAGIISLMKAILILQHDKIPAQPNQPIKMNPYLEPLIGKQIQLANGQSWTRNGAEPRYIFVNNFDAAGGNVSMLLQDPPAFALPAPASGPGLRTHHVVVTSGRTATAHEANRKRLHAYLSAHPDTNLADLAYTTTARRIHNVHREAYVASSTSDLVRQLEKPLADKVESAPPPAVVFTFTGQGAQSLGMGGALYSTSPTFRRLLDSLQSICEVQGLPTKFLNAIRGSGAEGATVTEVDMQVATVALEIALARYWRSLGIRPTVLIGHSLGEYAALCVAGVLSASDALALAFRRATLIFTRCPPSEAAMLAVGLPMRTVQYRIRDSAATTGCEVCCVNGPSSTVVGGPVAAIQALDEYLKSDGKVSTTRLRVQHAFHTRQMDVLLDELEASAAQVPFHAPTLPVASTVLGRIVRPGEQGVFDANYLRRHTREPVAFLDAVRACETEGLIPDRSFAVEIGPHPICISLMATCLQSAKINAWPSLRRGGDDWQSVSSTLAAAHSAQLPVAWSEFHKDHLDTVRLISDLPTYAFDLKTFWHSYKTPAAAVSAASATPSTTGLSRLASTTLHAVEKLQREEGKILGTFTVDLSDPKLAKAICGHVVDESAICPASIFIDMAYTAAVFLEQENGAGAALNTYELSSLEMHSPLVLREDIEVLPQVWVEAVLDIKSNAVSVHFKGQTSKGAVGYGSATMRLGQPDSAVRRDWSRIQSLVRARVQTLNRSVRPREVHAMDTALFYKVFSEIVDYSAPYHAVQEAVIAADFHDAAVTLQLTPTADLGTFTSSPFAVDALVHVAGFLLNADVRRPKNEVHIANHIGSLRIVGDLSSPGPYHVYATIREQDQKAGTSLCDVYTTDSQDRLVAVCSDICFKKLERDFFALLTGATRGRSTKPVAAAPAKSMAKRARQLAPSPSPSSSSGSNTPMSRSPTPSSVSDMVDLGTELLQAVAEQTGVSVAEMKSSPGTTFTEFGVDSQMAISILANFQRTTAVELPAAFFTNFPTPADAEAELGGSALDDLEEDITKPTPSPEQTQARKQGPAPSQHLLSLVAQALGLEASDLTPSTTFDSVGMDSMLSIKITAAFHAKTGIELPAAFFSANPTVGAAQEALDDDAEEESAPAQTSTNPAKETTIDSSRQHKLDAAVSRASYIHLKALPKGRRIYALESPFLEQPELFDLSIEEMATIFLRTIRRIQPHGPYLIGGWSAGSMYAYEVAHRLTREGETIQALIILDMRAPSLIPTSIVTTDFVDKLGTFEGINRARDLPEDLSVKERAHLMATCRALSRYDAPAFPSDRQPKQVAVVWALLGLDNRPDAPIASMGRPGLDIGKSMYEMNLDEFERYFNSWFYGRRQQFGTNGWEDLLGDHIAVYTVNGDHFSMMCPPYASEVGDIVIETVTRAVE.

The N-terminal acylcarrier protein transacylase domain (SAT) stretch occupies residues 17-232 (DAVHDLNVRS…KRPELAHATI (216 aa)). Residues 348–782 (ADAIAVVGMS…GGNVSMLLQD (435 aa)) form the Ketosynthase family 3 (KS3) domain. Catalysis depends on for beta-ketoacyl synthase activity residues C525, H660, and H702. Positions 881 to 1197 (VFTFTGQGAQ…RRGGDDWQSV (317 aa)) are malonyl-CoA:ACP transacylase (MAT) domain. The For acyl/malonyl transferase activity role is filled by S973. An N-terminal hotdog fold region spans residues 1272–1409 (HAVEKLQREE…GQPDSAVRRD (138 aa)). One can recognise a PKS/mFAS DH domain in the interval 1272–1582 (HAVEKLQREE…FKKLERDFFA (311 aa)). The product template (PT) domain stretch occupies residues 1303 to 1579 (GHVVDESAIC…DICFKKLERD (277 aa)). The active-site Proton acceptor; for dehydratase activity is H1304. A C-terminal hotdog fold region spans residues 1433 to 1582 (VHAMDTALFY…FKKLERDFFA (150 aa)). D1493 serves as the catalytic Proton donor; for dehydratase activity. Residues 1592–1638 (STKPVAAAPAKSMAKRARQLAPSPSPSSSSGSNTPMSRSPTPSSVSD) form a disordered region. Composition is skewed to low complexity over residues 1594-1603 (KPVAAAPAKS) and 1617-1631 (PSSS…SRSP). Carrier domains lie at 1640 to 1716 (VDLG…GGSA) and 1741 to 1815 (PAPS…DDDA). Position 1676 is an O-(pantetheine 4'-phosphoryl)serine (S1676). A disordered region spans residues 1722–1743 (EDITKPTPSPEQTQARKQGPAP). The residue at position 1775 (S1775) is an O-(pantetheine 4'-phosphoryl)serine. The disordered stretch occupies residues 1809-1838 (EALDDDAEEESAPAQTSTNPAKETTIDSSR). The segment covering 1810–1819 (ALDDDAEEES) has biased composition (acidic residues). Residues 1823–1836 (QTSTNPAKETTIDS) are compositionally biased toward polar residues. The segment at 1849 to 2082 (ASYIHLKALP…TVNGDHFSMM (234 aa)) is thioesterase (TE) domain.

The enzyme catalyses 3 malonyl-CoA + acetyl-CoA + 2 H(+) = orsellinate + 3 CO2 + 4 CoA. Its pathway is secondary metabolite biosynthesis. In terms of biological role, non-reducing polyketide synthase; part of the gene cluster that mediates the biosynthesis of orsellinic acid, as well as of the cathepsin K inhibitors F9775 A and F9775 B. The non-reducing polyketide synthase orsA produces orsellinic acid by condensing acetyl-CoA with 3 malonyl-CoA units. Further modifications by the decarboxylase orsB and the tyrosinase-like protein orsC lead to the production of F9775 A and F9775 B. The functions of orsD and orsE remain unclear since only orsB and orsC are required to convert orsellinic acid into F9775 A and F9775 B. This Emericella nidulans (strain FGSC A4 / ATCC 38163 / CBS 112.46 / NRRL 194 / M139) (Aspergillus nidulans) protein is Orsellinic acid synthase.